The following is a 376-amino-acid chain: Fructose-1,6-bisphosphate aldolase/phosphatase (376 aa).

Catalysis depends on Asp-11, which acts as the Proton acceptor; for FBP phosphatase activity. Mg(2+)-binding residues include Asp-11, His-18, Asp-49, and Asp-50. A beta-D-fructose 1,6-bisphosphate-binding site is contributed by His-18. His-18 is a binding site for dihydroxyacetone phosphate. Tyr-87 provides a ligand contact to beta-D-fructose 1,6-bisphosphate. Mg(2+) is bound at residue Gln-91. 100 to 101 contributes to the beta-D-fructose 1,6-bisphosphate binding site; sequence GN. Asp-128 contributes to the Mg(2+) binding site. Residue Lys-129 coordinates beta-D-fructose 1,6-bisphosphate. Lys-129 serves as a coordination point for dihydroxyacetone phosphate. Tyr-224 functions as the Proton donor/acceptor; for FBP aldolase activity in the catalytic mechanism. Lys-227, Asp-228, and Asp-229 together coordinate Mg(2+). Lys-227 acts as the Schiff-base intermediate with DHAP; for FBP aldolase activity in catalysis. Residues 237–238, Arg-261, and Tyr-342 contribute to the beta-D-fructose 1,6-bisphosphate site; that span reads QK. Arg-261 provides a ligand contact to dihydroxyacetone phosphate. The interval 357–376 is disordered; the sequence is MVPLKDSGPAGTGRAYEDPD.

The protein belongs to the FBP aldolase/phosphatase family. In terms of assembly, homooctamer; dimer of tetramers. It depends on Mg(2+) as a cofactor.

It catalyses the reaction beta-D-fructose 1,6-bisphosphate + H2O = beta-D-fructose 6-phosphate + phosphate. It carries out the reaction beta-D-fructose 1,6-bisphosphate = D-glyceraldehyde 3-phosphate + dihydroxyacetone phosphate. Its pathway is carbohydrate biosynthesis; gluconeogenesis. In terms of biological role, catalyzes two subsequent steps in gluconeogenesis: the aldol condensation of dihydroxyacetone phosphate (DHAP) and glyceraldehyde-3-phosphate (GA3P) to fructose-1,6-bisphosphate (FBP), and the dephosphorylation of FBP to fructose-6-phosphate (F6P). The chain is Fructose-1,6-bisphosphate aldolase/phosphatase from Cenarchaeum symbiosum (strain A).